Consider the following 350-residue polypeptide: 4-hydroxy-3-methylbut-2-enyl diphosphate reductase (350 aa).

A [4Fe-4S] cluster-binding site is contributed by Cys36. The (2E)-4-hydroxy-3-methylbut-2-enyl diphosphate site is built by His65 and His101. Positions 65 and 101 each coordinate dimethylallyl diphosphate. The isopentenyl diphosphate site is built by His65 and His101. Residue Cys123 coordinates [4Fe-4S] cluster. His151 serves as a coordination point for (2E)-4-hydroxy-3-methylbut-2-enyl diphosphate. His151 lines the dimethylallyl diphosphate pocket. His151 is a binding site for isopentenyl diphosphate. Glu153 acts as the Proton donor in catalysis. Thr192 contributes to the (2E)-4-hydroxy-3-methylbut-2-enyl diphosphate binding site. Residue Cys222 coordinates [4Fe-4S] cluster. (2E)-4-hydroxy-3-methylbut-2-enyl diphosphate contacts are provided by Ser250, Ser251, Asn252, and Ser295. Dimethylallyl diphosphate-binding residues include Ser250, Ser251, Asn252, and Ser295. 4 residues coordinate isopentenyl diphosphate: Ser250, Ser251, Asn252, and Ser295.

The protein belongs to the IspH family. Requires [4Fe-4S] cluster as cofactor.

The catalysed reaction is isopentenyl diphosphate + 2 oxidized [2Fe-2S]-[ferredoxin] + H2O = (2E)-4-hydroxy-3-methylbut-2-enyl diphosphate + 2 reduced [2Fe-2S]-[ferredoxin] + 2 H(+). The enzyme catalyses dimethylallyl diphosphate + 2 oxidized [2Fe-2S]-[ferredoxin] + H2O = (2E)-4-hydroxy-3-methylbut-2-enyl diphosphate + 2 reduced [2Fe-2S]-[ferredoxin] + 2 H(+). The protein operates within isoprenoid biosynthesis; dimethylallyl diphosphate biosynthesis; dimethylallyl diphosphate from (2E)-4-hydroxy-3-methylbutenyl diphosphate: step 1/1. It functions in the pathway isoprenoid biosynthesis; isopentenyl diphosphate biosynthesis via DXP pathway; isopentenyl diphosphate from 1-deoxy-D-xylulose 5-phosphate: step 6/6. In terms of biological role, catalyzes the conversion of 1-hydroxy-2-methyl-2-(E)-butenyl 4-diphosphate (HMBPP) into a mixture of isopentenyl diphosphate (IPP) and dimethylallyl diphosphate (DMAPP). Acts in the terminal step of the DOXP/MEP pathway for isoprenoid precursor biosynthesis. This chain is 4-hydroxy-3-methylbut-2-enyl diphosphate reductase, found in Rhizobium meliloti (strain 1021) (Ensifer meliloti).